We begin with the raw amino-acid sequence, 175 residues long: Gamma-crystallin B (175 aa).

2 Beta/gamma crystallin 'Greek key' domains span residues 2 to 40 and 41 to 83; these read GKIT…RVDS and GCWM…CLIP. Residues 84 to 88 form a connecting peptide region; it reads QHSGT. Beta/gamma crystallin 'Greek key' domains are found at residues 89 to 129 and 130 to 172; these read YRMR…NVME and GCWV…RRVM.

The protein belongs to the beta/gamma-crystallin family.

In terms of biological role, crystallins are the dominant structural components of the vertebrate eye lens. This chain is Gamma-crystallin B (Crygb), found in Mus musculus (Mouse).